Reading from the N-terminus, the 482-residue chain is Chitobiosyldiphosphodolichol beta-mannosyltransferase (482 aa).

At 1–2 (MA) the chain is on the lumenal side. A helical transmembrane segment spans residues 3–23 (ASCVALLVLALLLLVLLLGLW). The Cytoplasmic segment spans residues 24-99 (KRGRQTGRAR…DLRGLGAGPR (76 aa)). Positions 100–120 (ILQYGVKVVFQAVYLLWKMMR) form an intramembrane region, helical. Over 121-482 (MDPAAYIFLQ…PCGHPSCRGF (362 aa)) the chain is Cytoplasmic. The residue at position 242 (Ser242) is a Phosphoserine.

The protein belongs to the glycosyltransferase group 1 family. Glycosyltransferase 33 subfamily.

The protein resides in the endoplasmic reticulum membrane. It carries out the reaction an N,N'-diacetylchitobiosyl-diphospho-di-trans,poly-cis-dolichol + GDP-alpha-D-mannose = a beta-D-Man-(1-&gt;4)-beta-D-GlcNAc-(1-&gt;4)-alpha-D-GlcNAc-diphospho-di-trans,poly-cis-dolichol + GDP + H(+). Its pathway is protein modification; protein glycosylation. Functionally, mannosyltransferase that operates in the biosynthetic pathway of dolichol-linked oligosaccharides, the glycan precursors employed in protein asparagine (N)-glycosylation. The assembly of dolichol-linked oligosaccharides begins on the cytosolic side of the endoplasmic reticulum membrane and finishes in its lumen. The sequential addition of sugars to dolichol pyrophosphate produces dolichol-linked oligosaccharides containing fourteen sugars, including two GlcNAcs, nine mannoses and three glucoses. Once assembled, the oligosaccharide is transferred from the lipid to nascent proteins by oligosaccharyltransferases. Catalyzes, on the cytoplasmic face of the endoplasmic reticulum, the addition of the first mannose residues to the dolichol-linked oligosaccharide chain, to produce Man1GlcNAc(2)-PP-dolichol core oligosaccharide. Man1GlcNAc(2)-PP-dolichol is a substrate for ALG2, the following enzyme in the biosynthetic pathway. This is Chitobiosyldiphosphodolichol beta-mannosyltransferase from Mus musculus (Mouse).